The primary structure comprises 512 residues: Glycerol kinase, glycosomal (512 aa).

A substrate-binding site is contributed by threonine 11. ATP is bound at residue arginine 15. Substrate-binding residues include arginine 84, tyrosine 139, and aspartate 254. Residues threonine 276, glycine 321, and 422–426 contribute to the ATP site; that span reads GLSKN. A Microbody targeting signal motif is present at residues 510 to 512; it reads AKL.

The protein belongs to the FGGY kinase family.

It is found in the glycosome. It carries out the reaction glycerol + ATP = sn-glycerol 3-phosphate + ADP + H(+). Its pathway is polyol metabolism; glycerol degradation via glycerol kinase pathway; sn-glycerol 3-phosphate from glycerol: step 1/1. Functionally, catalyzes the phosphorylation of glycerol using ATP. Under anoxic conditions, when glycerol 3-phosphate accumulates in the glycosome, it catalyzes the reverse reaction, maintaining the ATP balance. Key enzyme for the survival of bloodstream forms under anoxic conditions. In Trypanosoma brucei brucei, this protein is Glycerol kinase, glycosomal (GK).